The chain runs to 330 residues: MNVYYEQDADLGYLQGKNIAVLGYGSQGHAHALNLKESGLNVRVGLRTDSASCQKARAAGLQVDTIADAVKWADVVMVLLPDQYQKAIYDSEIAPNMEPGNTLAFAHGFNIHYKQIVPPDTINVIMIAPKSPGHLVRRTFTEGNGVPCLIAIHHDATGEAKQQALAWAKGLGGAKAGVIETTIKNETETDLFGEQAVLCGGSAELIKAGFETLVEAGYPEELAYFECMHELKLIVDLFYEGGLSRMNYSVSDTAEYGGMTRGPRLITPAVKAEMKKILEEVQDGRFAKEFIDECNGGYKNLNRLRKENSSHPIETVGAKLRNMMSWLIKK.

The KARI N-terminal Rossmann domain occupies 1 to 181 (MNVYYEQDAD…GGAKAGVIET (181 aa)). Residues 24 to 27 (YGSQ), Arg-47, Ser-50, Ser-52, and 82 to 85 (DQYQ) each bind NADP(+). The active site involves His-107. Gly-133 contributes to the NADP(+) binding site. One can recognise a KARI C-terminal knotted domain in the interval 182 to 327 (TIKNETETDL…AKLRNMMSWL (146 aa)). Mg(2+)-binding residues include Asp-190, Glu-194, Glu-226, and Glu-230. Substrate is bound at residue Ser-251.

Belongs to the ketol-acid reductoisomerase family. It depends on Mg(2+) as a cofactor.

The enzyme catalyses (2R)-2,3-dihydroxy-3-methylbutanoate + NADP(+) = (2S)-2-acetolactate + NADPH + H(+). The catalysed reaction is (2R,3R)-2,3-dihydroxy-3-methylpentanoate + NADP(+) = (S)-2-ethyl-2-hydroxy-3-oxobutanoate + NADPH + H(+). It participates in amino-acid biosynthesis; L-isoleucine biosynthesis; L-isoleucine from 2-oxobutanoate: step 2/4. Its pathway is amino-acid biosynthesis; L-valine biosynthesis; L-valine from pyruvate: step 2/4. In terms of biological role, involved in the biosynthesis of branched-chain amino acids (BCAA). Catalyzes an alkyl-migration followed by a ketol-acid reduction of (S)-2-acetolactate (S2AL) to yield (R)-2,3-dihydroxy-isovalerate. In the isomerase reaction, S2AL is rearranged via a Mg-dependent methyl migration to produce 3-hydroxy-3-methyl-2-ketobutyrate (HMKB). In the reductase reaction, this 2-ketoacid undergoes a metal-dependent reduction by NADPH to yield (R)-2,3-dihydroxy-isovalerate. In Chlorobium phaeovibrioides (strain DSM 265 / 1930) (Prosthecochloris vibrioformis (strain DSM 265)), this protein is Ketol-acid reductoisomerase (NADP(+)).